The primary structure comprises 164 residues: Protein-export protein SecB (164 aa).

The protein belongs to the SecB family. As to quaternary structure, homotetramer, a dimer of dimers. One homotetramer interacts with 1 SecA dimer.

It localises to the cytoplasm. One of the proteins required for the normal export of preproteins out of the cell cytoplasm. It is a molecular chaperone that binds to a subset of precursor proteins, maintaining them in a translocation-competent state. It also specifically binds to its receptor SecA. This is Protein-export protein SecB from Herminiimonas arsenicoxydans.